The following is a 90-amino-acid chain: uncharacterized protein (90 aa).

The chain crosses the membrane as a helical span at residues 15-34 (HVLAISTFIATAAVASYFTT). Residues 34–65 (TKPKTKNEGKNSSALSQQKSGESSNSDAMGKD) form a disordered region. Positions 43-60 (KNSSALSQQKSGESSNSD) are enriched in polar residues. Asparagine 44 is a glycosylation site (N-linked (GlcNAc...) asparagine).

It is found in the mitochondrion membrane. This is an uncharacterized protein from Saccharomyces cerevisiae (strain ATCC 204508 / S288c) (Baker's yeast).